The primary structure comprises 481 residues: Cobyric acid synthase (481 aa).

In terms of domain architecture, GATase cobBQ-type spans 248–435 (ALTVAWLAFS…LHGMFGADGF (188 aa)). Cys-330 functions as the Nucleophile in the catalytic mechanism. His-427 is a catalytic residue.

This sequence belongs to the CobB/CobQ family. CobQ subfamily.

Its pathway is cofactor biosynthesis; adenosylcobalamin biosynthesis. Its function is as follows. Catalyzes amidations at positions B, D, E, and G on adenosylcobyrinic A,C-diamide. NH(2) groups are provided by glutamine, and one molecule of ATP is hydrogenolyzed for each amidation. This is Cobyric acid synthase from Cereibacter sphaeroides (strain ATCC 17023 / DSM 158 / JCM 6121 / CCUG 31486 / LMG 2827 / NBRC 12203 / NCIMB 8253 / ATH 2.4.1.) (Rhodobacter sphaeroides).